Reading from the N-terminus, the 336-residue chain is MATIKDVAKMAGVSTTTVSHVINKTRFVAKDTEEAVLSAIKQLNYSPSAVARSLKVNTTKSIGMIVTTSEAPYFAEIIHSVEEHCYRQGYSLFLCNTQNDPEKVKNHLEMLAKKRVDGLLVMCSEYTQDSLDLLSSFSTIPMVVMDWGPNANTDVIDDHSFDGGYLATKHLIECGHKKIGIICGELNKTTARTRYEGFEKAMEEAKLTINPSWVLEGAFEPEDGYECMNRLLTQEELPTALFCCNDVMALGAISALTEKCLRVPEDMSIIGYDDIHASRFYAPPLTTIHQSKLRLGRQAVNILLERITHKDEGVQQYSRIDITPELIIRKSVKSIL.

One can recognise an HTH lacI-type domain in the interval 2-56 (ATIKDVAKMAGVSTTTVSHVINKTRFVAKDTEEAVLSAIKQLNYSPSAVARSLKV). Residues 4 to 23 (IKDVAKMAGVSTTTVSHVIN) constitute a DNA-binding region (H-T-H motif). A DNA-binding region spans residues 48–56 (SAVARSLKV). Tyr-73, Lys-188, Thr-190, Phe-219, and Asp-273 together coordinate hypoxanthine.

As to quaternary structure, homodimer.

It participates in purine metabolism; purine nucleotide biosynthesis [regulation]. In terms of biological role, is the main repressor of the genes involved in the de novo synthesis of purine nucleotides, regulating purB, purC, purEK, purF, purHD, purL, purMN and guaBA expression. PurR is allosterically activated to bind its cognate DNA by binding the purine corepressors, hypoxanthine or guanine, thereby effecting transcription repression. The sequence is that of HTH-type transcriptional repressor PurR from Haemophilus influenzae (strain PittGG).